The following is a 142-amino-acid chain: DNA polymerase III subunit chi (142 aa).

This sequence belongs to the DNA polymerase III chi/HolC chain family. DNA polymerase III contains a core (composed of alpha, epsilon and theta chains) that associates with a tau subunit. This core dimerizes to form the POLIII' complex. PolIII' associates with the gamma complex (composed of gamma, delta, delta', psi and chi chains) and with the beta chain to form the complete DNA polymerase III complex. Interacts directly with the psi subunit (holD). The only subunit of the DNA polymerase III holoenzyme known to interact with single-stranded DNA binding protein (SSB).

It carries out the reaction DNA(n) + a 2'-deoxyribonucleoside 5'-triphosphate = DNA(n+1) + diphosphate. Part of the beta sliding clamp loading complex, which hydrolyzes ATP to load the beta clamp onto primed DNA to form the DNA replication pre-initiation complex. DNA polymerase III is a complex, multichain enzyme responsible for most of the replicative synthesis in bacteria. This DNA polymerase also exhibits 3' to 5' exonuclease activity. This Pseudomonas aeruginosa (strain ATCC 15692 / DSM 22644 / CIP 104116 / JCM 14847 / LMG 12228 / 1C / PRS 101 / PAO1) protein is DNA polymerase III subunit chi.